The following is a 159-amino-acid chain: MNISIISIGKLKEKYLKQGIAEYLKRLSAYAKVEVIELPDEKAPENLSEAEMLIVKEKEGIRILDKISDDTHVIALAIEGKQKSSEEFAVSLDRLATYGKSKVAFVIGGSLGLSSEVMKRSNESLSFSKMTLPHQLMRLVLLEQVYRAFRINRGEPYHK.

S-adenosyl-L-methionine-binding positions include Leu-76, Gly-108, and 127–132 (FSKMTL).

Belongs to the RNA methyltransferase RlmH family. Homodimer.

Its subcellular location is the cytoplasm. The enzyme catalyses pseudouridine(1915) in 23S rRNA + S-adenosyl-L-methionine = N(3)-methylpseudouridine(1915) in 23S rRNA + S-adenosyl-L-homocysteine + H(+). In terms of biological role, specifically methylates the pseudouridine at position 1915 (m3Psi1915) in 23S rRNA. In Bacillus anthracis (strain CDC 684 / NRRL 3495), this protein is Ribosomal RNA large subunit methyltransferase H.